Consider the following 347-residue polypeptide: Holliday junction branch migration complex subunit RuvB (347 aa).

Residues 1–180 form a large ATPase domain (RuvB-L) region; that stretch reads MTSRVVSPEQ…FGIPCRMNFY (180 aa). ATP is bound by residues Leu19, Arg20, Gly61, Lys64, Thr65, Thr66, 127 to 129, Arg170, Tyr180, and Arg217; that span reads EDF. Thr65 is a binding site for Mg(2+). Positions 181–251 are small ATPAse domain (RuvB-S); that stretch reads EPAELEAIVS…VADAALNRLE (71 aa). Positions 254–347 are head domain (RuvB-H); the sequence is RIGLDAMDRR…LLTRMDEEGE (94 aa). The DNA site is built by Arg290, Arg309, and Arg314.

This sequence belongs to the RuvB family. In terms of assembly, homohexamer. Forms an RuvA(8)-RuvB(12)-Holliday junction (HJ) complex. HJ DNA is sandwiched between 2 RuvA tetramers; dsDNA enters through RuvA and exits via RuvB. An RuvB hexamer assembles on each DNA strand where it exits the tetramer. Each RuvB hexamer is contacted by two RuvA subunits (via domain III) on 2 adjacent RuvB subunits; this complex drives branch migration. In the full resolvosome a probable DNA-RuvA(4)-RuvB(12)-RuvC(2) complex forms which resolves the HJ.

It localises to the cytoplasm. The enzyme catalyses ATP + H2O = ADP + phosphate + H(+). The RuvA-RuvB-RuvC complex processes Holliday junction (HJ) DNA during genetic recombination and DNA repair, while the RuvA-RuvB complex plays an important role in the rescue of blocked DNA replication forks via replication fork reversal (RFR). RuvA specifically binds to HJ cruciform DNA, conferring on it an open structure. The RuvB hexamer acts as an ATP-dependent pump, pulling dsDNA into and through the RuvAB complex. RuvB forms 2 homohexamers on either side of HJ DNA bound by 1 or 2 RuvA tetramers; 4 subunits per hexamer contact DNA at a time. Coordinated motions by a converter formed by DNA-disengaged RuvB subunits stimulates ATP hydrolysis and nucleotide exchange. Immobilization of the converter enables RuvB to convert the ATP-contained energy into a lever motion, pulling 2 nucleotides of DNA out of the RuvA tetramer per ATP hydrolyzed, thus driving DNA branch migration. The RuvB motors rotate together with the DNA substrate, which together with the progressing nucleotide cycle form the mechanistic basis for DNA recombination by continuous HJ branch migration. Branch migration allows RuvC to scan DNA until it finds its consensus sequence, where it cleaves and resolves cruciform DNA. The protein is Holliday junction branch migration complex subunit RuvB of Paramagnetospirillum magneticum (strain ATCC 700264 / AMB-1) (Magnetospirillum magneticum).